The following is a 408-amino-acid chain: Acetate kinase (408 aa).

Asn-7 is a binding site for Mg(2+). Lys-14 contacts ATP. Arg-91 contacts substrate. Residue Asp-148 is the Proton donor/acceptor of the active site. Residues 208–212 (HLGNG), 283–285 (DFR), and 331–335 (GIGEN) each bind ATP. A Mg(2+)-binding site is contributed by Glu-384.

Belongs to the acetokinase family. Homodimer. Mg(2+) serves as cofactor. The cofactor is Mn(2+).

Its subcellular location is the cytoplasm. The catalysed reaction is acetate + ATP = acetyl phosphate + ADP. Its pathway is metabolic intermediate biosynthesis; acetyl-CoA biosynthesis; acetyl-CoA from acetate: step 1/2. Functionally, catalyzes the formation of acetyl phosphate from acetate and ATP. Can also catalyze the reverse reaction. This chain is Acetate kinase, found in Methanosarcina mazei (Methanosarcina frisia).